We begin with the raw amino-acid sequence, 123 residues long: ATP synthase epsilon chain (123 aa).

This sequence belongs to the ATPase epsilon chain family. F-type ATPases have 2 components, CF(1) - the catalytic core - and CF(0) - the membrane proton channel. CF(1) has five subunits: alpha(3), beta(3), gamma(1), delta(1), epsilon(1). CF(0) has three main subunits: a, b and c.

Its subcellular location is the cell inner membrane. Produces ATP from ADP in the presence of a proton gradient across the membrane. The sequence is that of ATP synthase epsilon chain from Helicobacter pylori (strain HPAG1).